Reading from the N-terminus, the 167-residue chain is Large ribosomal subunit protein uL15 (167 aa).

The span at 1–10 shows a compositional bias: polar residues; it reads MKLNQISDNP. The disordered stretch occupies residues 1–37; that stretch reads MKLNQISDNPGATKDRMRVGRGIGSGKGKTAGRGVKG. Residues 21–35 show a composition bias toward gly residues; it reads RGIGSGKGKTAGRGV.

It belongs to the universal ribosomal protein uL15 family. Part of the 50S ribosomal subunit.

Its function is as follows. Binds to the 23S rRNA. The protein is Large ribosomal subunit protein uL15 of Methylobacterium radiotolerans (strain ATCC 27329 / DSM 1819 / JCM 2831 / NBRC 15690 / NCIMB 10815 / 0-1).